The chain runs to 2036 residues: Bikaverin polyketide synthase bik1 (2036 aa).

The tract at residues 8 to 242 (YVFGDQSTPV…YPAPIYGPYH (235 aa)) is N-terminal acylcarrier protein transacylase domain (SAT). A Ketosynthase family 3 (KS3) domain is found at 370-801 (ENKIAIIGFS…GGNTSLLLED (432 aa)). Catalysis depends on for beta-ketoacyl synthase activity residues C541, H676, and H718. An acyl/malonyl transferases region spans residues 908-1209 (FLFTGQGAQE…LASLRRKEDH (302 aa)). The For acyl/malonyl transferase activity role is filled by S997. Residues 1293 to 1425 (HNVIEQVHGD…CDVAVENPSS (133 aa)) are N-terminal hotdog fold. In terms of domain architecture, PKS/mFAS DH spans 1293 to 1600 (HNVIEQVHGD…FKKVARKVLE (308 aa)). The interval 1295-1599 (VIEQVHGDKR…TFKKVARKVL (305 aa)) is product template (PT) domain. The active-site Proton acceptor; for dehydratase activity is H1325. The interval 1452–1600 (SAHMMRRGLL…FKKVARKVLE (149 aa)) is C-terminal hotdog fold. Residue D1511 is the Proton donor; for dehydratase activity of the active site. A disordered region spans residues 1628 to 1654 (VLTPPSTTSHSVGTTSPPEPTESPVGS). The segment covering 1638 to 1654 (SVGTTSPPEPTESPVGS) has biased composition (low complexity). The 78-residue stretch at 1653–1730 (GSASGLIQKA…DLKSFLGAND (78 aa)) folds into the Carrier domain. At S1690 the chain carries O-(pantetheine 4'-phosphoryl)serine. A disordered region spans residues 1733–1758 (FSSSNSEAESSASSAASTSPSDHGDD). Residues 1734–1753 (SSSNSEAESSASSAASTSPS) are compositionally biased toward low complexity. S1857 serves as the catalytic For thioesterase activity.

It functions in the pathway secondary metabolite biosynthesis. Its function is as follows. Polyketide synthase; part of the gene cluster that mediates the biosynthesis of bikaverin, a red pigment also considered as a mycotoxin. The first stage is catalyzed by the polyketide synthase bik1, which catalyzes the formation of the intermediate SMA76a also knowm as pre-bikaverin. FAD-dependent monooxygenase bik2 might then be responsible for the oxidation of pre-bikaverin to oxo-pre-bikaverin which is in turn methylated by the O-methyltransferase bik3 to me-oxo-pre-bikaverin. A further cycle of oxydation and methylation by bik2 and bik3 leads to the final product of bikaverin, via a nor-bikaverin intermediate. The chain is Bikaverin polyketide synthase bik1 from Gibberella fujikuroi (strain CBS 195.34 / IMI 58289 / NRRL A-6831) (Bakanae and foot rot disease fungus).